We begin with the raw amino-acid sequence, 125 residues long: MLKEFKEFISRGNVMDLAVGVIIGGAFTAIVNSLVKYIINPFLGLFVGAIDFSDLVFKIGNATFRVGSFLNAVINFLIIAFVVFLMVKGINKVLRQDKKEEAPAPKDPQLEVLEEIRDSLKKLDK.

The next 3 helical transmembrane spans lie at 19 to 39 (VGVI…KYII), 42 to 62 (FLGL…IGNA), and 66 to 86 (VGSF…VFLM).

The protein belongs to the MscL family. As to quaternary structure, homopentamer.

The protein resides in the cell membrane. Functionally, channel that opens in response to stretch forces in the membrane lipid bilayer. May participate in the regulation of osmotic pressure changes within the cell. This Ligilactobacillus salivarius (strain UCC118) (Lactobacillus salivarius) protein is Large-conductance mechanosensitive channel.